The following is a 438-amino-acid chain: Methylenetetrahydrofolate--tRNA-(uracil-5-)-methyltransferase TrmFO (438 aa).

9–14 (GGGLAG) lines the FAD pocket.

It belongs to the MnmG family. TrmFO subfamily. It depends on FAD as a cofactor.

The protein localises to the cytoplasm. It carries out the reaction uridine(54) in tRNA + (6R)-5,10-methylene-5,6,7,8-tetrahydrofolate + NADH + H(+) = 5-methyluridine(54) in tRNA + (6S)-5,6,7,8-tetrahydrofolate + NAD(+). It catalyses the reaction uridine(54) in tRNA + (6R)-5,10-methylene-5,6,7,8-tetrahydrofolate + NADPH + H(+) = 5-methyluridine(54) in tRNA + (6S)-5,6,7,8-tetrahydrofolate + NADP(+). In terms of biological role, catalyzes the folate-dependent formation of 5-methyl-uridine at position 54 (M-5-U54) in all tRNAs. The chain is Methylenetetrahydrofolate--tRNA-(uracil-5-)-methyltransferase TrmFO from Lactobacillus johnsonii (strain CNCM I-12250 / La1 / NCC 533).